The primary structure comprises 298 residues: Probable 3-hydroxyacyl-CoA dehydrogenase F54C8.1 (298 aa).

The protein belongs to the 3-hydroxyacyl-CoA dehydrogenase family. As to quaternary structure, homodimer.

It localises to the mitochondrion matrix. The catalysed reaction is a (3S)-3-hydroxyacyl-CoA + NAD(+) = a 3-oxoacyl-CoA + NADH + H(+). Its pathway is lipid metabolism; fatty acid beta-oxidation. The protein is Probable 3-hydroxyacyl-CoA dehydrogenase F54C8.1 of Caenorhabditis elegans.